The primary structure comprises 120 residues: NAD(P)H-quinone oxidoreductase subunit 3, chloroplastic (120 aa).

The next 3 membrane-spanning stretches (helical) occupy residues 9–29 (IFWA…LISG), 64–84 (MFAL…PWAM), and 88–108 (VLGV…IVGS).

The protein belongs to the complex I subunit 3 family. As to quaternary structure, NDH is composed of at least 16 different subunits, 5 of which are encoded in the nucleus.

It is found in the plastid. It localises to the chloroplast thylakoid membrane. It catalyses the reaction a plastoquinone + NADH + (n+1) H(+)(in) = a plastoquinol + NAD(+) + n H(+)(out). The enzyme catalyses a plastoquinone + NADPH + (n+1) H(+)(in) = a plastoquinol + NADP(+) + n H(+)(out). In terms of biological role, NDH shuttles electrons from NAD(P)H:plastoquinone, via FMN and iron-sulfur (Fe-S) centers, to quinones in the photosynthetic chain and possibly in a chloroplast respiratory chain. The immediate electron acceptor for the enzyme in this species is believed to be plastoquinone. Couples the redox reaction to proton translocation, and thus conserves the redox energy in a proton gradient. In Gossypium barbadense (Sea Island cotton), this protein is NAD(P)H-quinone oxidoreductase subunit 3, chloroplastic.